The following is a 201-amino-acid chain: Receptor expression-enhancing protein 6 (201 aa).

The next 3 helical transmembrane spans lie at Leu36 to Leu56, Trp89 to Phe109, and Cys117 to His137.

It belongs to the DP1 family. Interacts with STX3. Interacts with clathrin. Expressed in the inner segment of rod photoreceptors and outer plexiform layer of the retina (at protein level). Expressed in liver, but not detected in brain, muscle, kidney, retinal cone photoreceptors or retinal ganglion cells (at protein level). Highly expressed in the ganglion cell layer of the retina and in liver, and also detected at low levels in kidney and testis. Isoform 1: Expressed in the retina. Isoform 2: Expressed in liver.

It localises to the endoplasmic reticulum membrane. The protein localises to the cytoplasmic vesicle. Its subcellular location is the clathrin-coated vesicle membrane. Required for correct function and survival of retinal photoreceptors. Required for retinal development. In rod photoreceptors, facilitates stability and/or trafficking of guanylate cyclases and is required to maintain endoplasmic reticulum and mitochondrial homeostasis. May play a role in clathrin-coated intracellular vesicle trafficking of proteins from the endoplasmic reticulum to the retinal rod plasma membrane. The sequence is that of Receptor expression-enhancing protein 6 (Reep6) from Mus musculus (Mouse).